The chain runs to 559 residues: Sesquiterpene synthase (559 aa).

Positions 312, 316, and 464 each coordinate Mg(2+). The short motif at 312 to 316 (DDIYD) is the DDXXD motif element.

It belongs to the terpene synthase family. Tpsa subfamily. Mg(2+) serves as cofactor. Requires Mn(2+) as cofactor.

In terms of biological role, catalyzes alpha-humulene and delta-cadinene, as well as beta-elemene, the thermal rearrangement product of germacrene A and several other bicyclic sesquiterpenes when incubated with (2E,6E)-farnesyl diphosphate. This Santalum austrocaledonicum (Sandalwood) protein is Sesquiterpene synthase.